A 398-amino-acid chain; its full sequence is tRNA pseudouridine synthase D (398 aa).

Asp76 (nucleophile) is an active-site residue. In terms of domain architecture, TRUD spans Gly151–Ile360.

It belongs to the pseudouridine synthase TruD family.

It carries out the reaction uridine(13) in tRNA = pseudouridine(13) in tRNA. Its function is as follows. Responsible for synthesis of pseudouridine from uracil-13 in transfer RNAs. This chain is tRNA pseudouridine synthase D, found in Syntrophotalea carbinolica (strain DSM 2380 / NBRC 103641 / GraBd1) (Pelobacter carbinolicus).